We begin with the raw amino-acid sequence, 95 residues long: Large ribosomal subunit protein uL23 (95 aa).

This sequence belongs to the universal ribosomal protein uL23 family. In terms of assembly, contacts protein L29, and trigger factor when it is bound to the ribosome. Part of the 50S ribosomal subunit.

Its function is as follows. One of the early assembly proteins it binds 23S rRNA. One of the proteins that surrounds the polypeptide exit tunnel on the outside of the ribosome. Forms the main docking site for trigger factor binding to the ribosome. The polypeptide is Large ribosomal subunit protein uL23 (Geobacillus stearothermophilus (Bacillus stearothermophilus)).